The sequence spans 748 residues: Acyl-coenzyme A oxidase (748 aa).

Belongs to the acyl-CoA oxidase family. FAD is required as a cofactor.

It is found in the peroxisome. It catalyses the reaction a 2,3-saturated acyl-CoA + O2 = a (2E)-enoyl-CoA + H2O2. Its pathway is lipid metabolism; peroxisomal fatty acid beta-oxidation. This Candida glabrata (strain ATCC 2001 / BCRC 20586 / JCM 3761 / NBRC 0622 / NRRL Y-65 / CBS 138) (Yeast) protein is Acyl-coenzyme A oxidase (POX1).